A 338-amino-acid chain; its full sequence is Large ribosomal subunit protein uL3 (338 aa).

Residues 228-237 (HKHRKGHRRT) are compositionally biased toward basic residues. The interval 228 to 255 (HKHRKGHRRTGTIGPQAPALMFTQPRPG) is disordered.

This sequence belongs to the universal ribosomal protein uL3 family. As to quaternary structure, part of the 50S ribosomal subunit. Forms a cluster with proteins L14 and L24e.

Its function is as follows. One of the primary rRNA binding proteins, it binds directly near the 3'-end of the 23S rRNA, where it nucleates assembly of the 50S subunit. This Pyrobaculum calidifontis (strain DSM 21063 / JCM 11548 / VA1) protein is Large ribosomal subunit protein uL3.